A 118-amino-acid polypeptide reads, in one-letter code: Large ribosomal subunit protein uL22 (118 aa).

Belongs to the universal ribosomal protein uL22 family. Part of the 50S ribosomal subunit.

Functionally, this protein binds specifically to 23S rRNA; its binding is stimulated by other ribosomal proteins, e.g. L4, L17, and L20. It is important during the early stages of 50S assembly. It makes multiple contacts with different domains of the 23S rRNA in the assembled 50S subunit and ribosome. In terms of biological role, the globular domain of the protein is located near the polypeptide exit tunnel on the outside of the subunit, while an extended beta-hairpin is found that lines the wall of the exit tunnel in the center of the 70S ribosome. The protein is Large ribosomal subunit protein uL22 of Prosthecochloris aestuarii (strain DSM 271 / SK 413).